The chain runs to 615 residues: Dolichyl-diphosphooligosaccharide--protein glycosyltransferase subunit 1A (615 aa).

The N-terminal stretch at 1–28 is a signal peptide; sequence MATPPPLRRVAALLLLLVAAASTPTARA. The Lumenal portion of the chain corresponds to 29 to 437; it reads DLVVTRADRK…RFNNISLLRE (409 aa). Lys187 is modified (N6-acetyllysine). Residues Asn300, Asn353, and Asn431 are each glycosylated (N-linked (GlcNAc...) asparagine). Residues 438 to 455 traverse the membrane as a helical segment; that stretch reads PMMLITGFFLLFMACIVY. Residues 456 to 615 lie on the Cytoplasmic side of the membrane; the sequence is MRTDMSISKN…ESLLEYISEI (160 aa).

Belongs to the OST1 family. In terms of assembly, component of the oligosaccharyltransferase (OST) complex.

It localises to the endoplasmic reticulum membrane. It participates in protein modification; protein glycosylation. Its function is as follows. Subunit of the oligosaccharyl transferase (OST) complex that catalyzes the initial transfer of a defined glycan (Glc(3)Man(9)GlcNAc(2) in eukaryotes) from the lipid carrier dolichol-pyrophosphate to an asparagine residue within an Asn-X-Ser/Thr consensus motif in nascent polypeptide chains, the first step in protein N-glycosylation. N-glycosylation occurs cotranslationally and the complex associates with the Sec61 complex at the channel-forming translocon complex that mediates protein translocation across the endoplasmic reticulum (ER). All subunits are required for a maximal enzyme activity. In Oryza sativa subsp. japonica (Rice), this protein is Dolichyl-diphosphooligosaccharide--protein glycosyltransferase subunit 1A (OST1A).